A 158-amino-acid chain; its full sequence is MARFPNPAERPYKLPDLCTALDTTLHDITIDCVYCKTQLQQTEVYEFAFSDLFIVYRNGEPYAACQKCIKFHAKVRELRHYSNSVYATTLESITNTKLYNLSIRCMSCLKPLCPAEKLRHVNTKRRFHQIAGSYTGQCRHCWTSNREDRRRIRRETQV.

2 zinc fingers span residues 32 to 68 (CVYC…CQKC) and 105 to 141 (CMSC…CRHC). The short motif at 156–158 (TQV) is the PDZ-binding domain element.

Belongs to the papillomaviridae E6 protein family. In terms of assembly, forms homodimers. Interacts with ubiquitin-protein ligase UBE3A/E6-AP and thus forms a complex with human TP53. Interacts with human NFX1 and MAGI3. Interacts with human IRF3; this interaction inhibits the establishment of antiviral state. Interacts with human TYK2; this interaction inhibits JAK-STAT activation by interferon alpha. Interacts with host DLG1; this interaction leads to the proteasomal degradation of DLG1.

Its subcellular location is the host cytoplasm. The protein localises to the host nucleus. Its function is as follows. Plays a major role in the induction and maintenance of cellular transformation. Acts mainly as an oncoprotein by stimulating the destruction of many host cell key regulatory proteins. E6 associates with host UBE3A/E6-AP ubiquitin-protein ligase, and inactivates tumor suppressors TP53 and TP73 by targeting them to the 26S proteasome for degradation. In turn, DNA damage and chromosomal instabilities increase and lead to cell proliferation and cancer development. The complex E6/E6AP targets several other substrates to degradation via the proteasome including host DLG1 or NFX1, a repressor of human telomerase reverse transcriptase (hTERT). The resulting increased expression of hTERT prevents the shortening of telomere length leading to cell immortalization. Other cellular targets including BAK1, Fas-associated death domain-containing protein (FADD) and procaspase 8, are degraded by E6/E6AP causing inhibition of apoptosis. E6 also inhibits immune response by interacting with host IRF3 and TYK2. These interactions prevent IRF3 transcriptional activities and inhibit TYK2-mediated JAK-STAT activation by interferon alpha resulting in inhibition of the interferon signaling pathway. The sequence is that of Protein E6 from Homo sapiens (Human).